Consider the following 92-residue polypeptide: Small ribosomal subunit protein uS19 (92 aa).

Belongs to the universal ribosomal protein uS19 family.

Functionally, protein S19 forms a complex with S13 that binds strongly to the 16S ribosomal RNA. The chain is Small ribosomal subunit protein uS19 from Rickettsia bellii (strain OSU 85-389).